We begin with the raw amino-acid sequence, 71 residues long: Small ribosomal subunit protein bS21 (71 aa).

Positions 38–71 are disordered; sequence YEKPTTVRKRAKAAAQKRHAKKLSRENARRVRLY. Positions 43–59 are enriched in basic residues; the sequence is TVRKRAKAAAQKRHAKK. Positions 60 to 71 are enriched in basic and acidic residues; the sequence is LSRENARRVRLY.

It belongs to the bacterial ribosomal protein bS21 family.

The sequence is that of Small ribosomal subunit protein bS21 from Aliivibrio fischeri (strain ATCC 700601 / ES114) (Vibrio fischeri).